A 591-amino-acid chain; its full sequence is V-type ATP synthase alpha chain (591 aa).

Residue 233-240 coordinates ATP; the sequence is GPFGAGKT.

This sequence belongs to the ATPase alpha/beta chains family.

It catalyses the reaction ATP + H2O + 4 H(+)(in) = ADP + phosphate + 5 H(+)(out). Functionally, produces ATP from ADP in the presence of a proton gradient across the membrane. The V-type alpha chain is a catalytic subunit. The protein is V-type ATP synthase alpha chain of Streptococcus pneumoniae (strain ATCC 700669 / Spain 23F-1).